The chain runs to 350 residues: Phosphatidylinositol transfer protein PDR17 (350 aa).

Residues 139–297 (KVAVENETGK…LYNGLLDFKY (159 aa)) enclose the CRAL-TRIO domain.

In terms of assembly, interacts with phosphatidylserine decarboxylase PSD2. Also interacts with PBI1.

Its subcellular location is the cytoplasm. It localises to the microsome. It catalyses the reaction a 1,2-diacyl-sn-glycero-3-phospho-(1D-myo-inositol)(in) = a 1,2-diacyl-sn-glycero-3-phospho-(1D-myo-inositol)(out). Has phosphatidylinositol transfer activity. Involved in the regulation of the phospholipid composition of plasma- and endomembranes. Altering plasma membrane composition may provide a possible mechanism for multidrug resistance. Contributes to efficient phospholipase D1 activation and phospholipase B1 inhibition in the regulation of phospholipid turnover. Forms a complex with phosphatidylserine decarboxylase PSD2 that seems essential for maintenance of vacuolar phosphatidylethanolamine (PE) levels. Allows interorganelle phosphatidylserine (PtdSer) transport via a process that involves the acceptor membrane complex PDR17-PDS2 that binds to PBI1 which in turn ligates to SCS2 and phosphatidic acid present in the donor membrane, forming a zone of apposition that facilitates PtdSer transfer. This is Phosphatidylinositol transfer protein PDR17 from Saccharomyces cerevisiae (strain ATCC 204508 / S288c) (Baker's yeast).